The following is a 59-amino-acid chain: Large ribosomal subunit protein bL33 (59 aa).

Residues R26–K59 form a disordered region.

The protein belongs to the bacterial ribosomal protein bL33 family.

This is Large ribosomal subunit protein bL33 from Chlorobium phaeobacteroides (strain BS1).